The chain runs to 144 residues: Urease accessory protein UreE (144 aa).

The protein belongs to the UreE family.

Its subcellular location is the cytoplasm. In terms of biological role, involved in urease metallocenter assembly. Binds nickel. Probably functions as a nickel donor during metallocenter assembly. This chain is Urease accessory protein UreE, found in Thermosynechococcus vestitus (strain NIES-2133 / IAM M-273 / BP-1).